Consider the following 174-residue polypeptide: Type II restriction enzyme Bsp6I (174 aa).

The catalysed reaction is Endonucleolytic cleavage of DNA to give specific double-stranded fragments with terminal 5'-phosphates.. Its function is as follows. A P subtype restriction enzyme that recognizes the double-stranded sequence 5'-GCNGC-3' and cleaves after C-2. The protein is Type II restriction enzyme Bsp6I of Bacillus sp. (strain RFL6).